Here is a 125-residue protein sequence, read N- to C-terminus: Profilin-A (125 aa).

Serine 2 is subject to N-acetylserine.

Belongs to the profilin family. As to quaternary structure, occurs in many kinds of cells as a complex with monomeric actin in a 1:1 ratio.

It is found in the cytoplasm. Its subcellular location is the cytoskeleton. Binds to actin and affects the structure of the cytoskeleton. At high concentrations, profilin prevents the polymerization of actin, whereas it enhances it at low concentrations. By binding to PIP2, it inhibits the formation of IP3 and DG. This is Profilin-A (PROA) from Physarum polycephalum (Slime mold).